A 140-amino-acid chain; its full sequence is Phosphopantetheine adenylyltransferase (140 aa).

Position 9 (S9) interacts with substrate. ATP-binding positions include 9 to 10 (SF) and H17. Residues K41, T74, and R88 each contribute to the substrate site. Residues 89–91 (GLR), E99, and 124–130 (KRSLSST) each bind ATP.

Belongs to the bacterial CoaD family. In terms of assembly, homohexamer. Mg(2+) serves as cofactor.

Its subcellular location is the cytoplasm. It catalyses the reaction (R)-4'-phosphopantetheine + ATP + H(+) = 3'-dephospho-CoA + diphosphate. It participates in cofactor biosynthesis; coenzyme A biosynthesis; CoA from (R)-pantothenate: step 4/5. Its function is as follows. Reversibly transfers an adenylyl group from ATP to 4'-phosphopantetheine, yielding dephospho-CoA (dPCoA) and pyrophosphate. This Mycoplasma capricolum subsp. capricolum (strain California kid / ATCC 27343 / NCTC 10154) protein is Phosphopantetheine adenylyltransferase.